Reading from the N-terminus, the 275-residue chain is Shikimate dehydrogenase (NADP(+)) (275 aa).

Residues 19 to 21 and threonine 66 contribute to the shikimate site; that span reads SKS. The active-site Proton acceptor is the lysine 70. Glutamate 82 lines the NADP(+) pocket. Shikimate is bound by residues asparagine 91 and aspartate 106. Residues 130–134, 154–159, and methionine 217 each bind NADP(+); these read GAGGA and NRTASK. Tyrosine 219 is a binding site for shikimate. Glycine 241 contacts NADP(+).

The protein belongs to the shikimate dehydrogenase family. In terms of assembly, homodimer.

The enzyme catalyses shikimate + NADP(+) = 3-dehydroshikimate + NADPH + H(+). Its pathway is metabolic intermediate biosynthesis; chorismate biosynthesis; chorismate from D-erythrose 4-phosphate and phosphoenolpyruvate: step 4/7. Involved in the biosynthesis of the chorismate, which leads to the biosynthesis of aromatic amino acids. Catalyzes the reversible NADPH linked reduction of 3-dehydroshikimate (DHSA) to yield shikimate (SA). This Colwellia psychrerythraea (strain 34H / ATCC BAA-681) (Vibrio psychroerythus) protein is Shikimate dehydrogenase (NADP(+)).